Reading from the N-terminus, the 752-residue chain is MAANPEDFSGWLEGNVAAARRHRGAEEEEGEAAEQGRTIKAQQAGHQPVAMEMTSTDSTNIFHLHDRESKDHDDGLSYTYLSSDKHYISHPDSTYFTGISKKETESLDKKEFSGAGPHSPKEIPTFDSRGLFSSDSGIEMTPAEWSDVNRSLADPIEEEKLEACKYIDIRRSPDMKSQQVVDAGFGANRSNTISQAAPTEQQTYDSVTMSWQKDHYNGNISEYLPYMEEPREDFGLYHSPTSKEPKSAPVTITFTGMETALQTEYPGNQQGKSNKGLRPSPDLVPTVTVSEPEEDSPESLTPPSTDADGYAEPCGSEKQREYGICEDELISAIKAKEGTKRFSSETNDEKQSRSFHAEKQDFTVMSTEATSASHYTKASSAESGDSEIELVSEDQVGAEEAMQSAYMTFSHISGPPPSPASPSIQYSILREEREAELDSELIIESCDGSSASEESPKRDPDSPMMKPMIMDIIEEENLSRTESFEASDFESCSLKEKKLNMENLAESASYLKGKFPAEIRADMPSTKKEEFLPQKKSPEGPAYQSKVIGMTSILGPKPLTFFKKKAIDLLYWRDVKQTGIVFGSILLMLFSLTLFSVVSVIAYLALAALSATISFRIYKSVLQAVQKTDEGHPFKSYLDIEISLSQEQIQKYTGCFQLYTNSIAKELRRLFLVQDLVDSLKFAVLMWLLTYVGALFNGLTLLIMAVVSMFSLPVVYDKYQAQIDQYLGLVRTNMNIIVTKIQAKIPGTKQKE.

Disordered regions lie at residues 1-57 (MAAN…TSTD), 264-319 (EYPG…SEKQ), 334-424 (KAKE…SPSI), and 444-465 (ESCD…SPMM). Over residues 264–273 (EYPGNQQGKS) the composition is skewed to polar residues. A compositionally biased stretch (basic and acidic residues) spans 334–361 (KAKEGTKRFSSETNDEKQSRSFHAEKQD). Polar residues predominate over residues 363 to 383 (TVMSTEATSASHYTKASSAES). One can recognise a Reticulon domain in the interval 566–752 (AIDLLYWRDV…AKIPGTKQKE (187 aa)). The next 2 helical transmembrane spans lie at 580–600 (IVFG…VVSV) and 684–704 (VLMW…LLIM).

Isoform A and isoform C are both expressed in the animal hemisphere (presumptive neural ectoderm) of blastula and gastrula stage embryos, and along the anterior neural border, in the panplacodal primordium, and in the dorsolateral side of archenteron roof of late neurula embryos. At the tailbud stage, expression of the isoforms begin to differ. Isoform A localizes to the cranial placodes including the trigeminal placode, lateral line placode, olfactory placode and otic vesicle. Isoform C localizes to the central nervous system, including the spinal cord, prosencephalon, mesencephalon and rhombencephalon, as well as the lateral line placode, otic vesicle and pronephros.

Its subcellular location is the endoplasmic reticulum membrane. It localises to the nucleus. Functionally, inhibits amyloid precursor protein processing, probably by blocking BACE1 activity. In Xenopus laevis (African clawed frog), this protein is Reticulon-1-B (rtn1-b).